An 88-amino-acid polypeptide reads, in one-letter code: UPF0297 protein SGO_2042 (88 aa).

It belongs to the UPF0297 family.

This chain is UPF0297 protein SGO_2042, found in Streptococcus gordonii (strain Challis / ATCC 35105 / BCRC 15272 / CH1 / DL1 / V288).